The following is a 165-amino-acid chain: Peptide deformylase (165 aa).

2 residues coordinate Fe cation: Cys88 and His130. Glu131 is a catalytic residue. Fe cation is bound at residue His134.

The protein belongs to the polypeptide deformylase family. It depends on Fe(2+) as a cofactor.

The enzyme catalyses N-terminal N-formyl-L-methionyl-[peptide] + H2O = N-terminal L-methionyl-[peptide] + formate. Removes the formyl group from the N-terminal Met of newly synthesized proteins. Requires at least a dipeptide for an efficient rate of reaction. N-terminal L-methionine is a prerequisite for activity but the enzyme has broad specificity at other positions. The sequence is that of Peptide deformylase from Borreliella burgdorferi (strain ATCC 35210 / DSM 4680 / CIP 102532 / B31) (Borrelia burgdorferi).